Here is a 1409-residue protein sequence, read N- to C-terminus: Protein three rows (1409 aa).

The interval 1052–1058 (VEPIRKQ) is separase cleavage-site. 2 disordered regions span residues 1260–1284 (PIGC…SDHV) and 1297–1409 (DDAA…RQRN). Low complexity-rich tracts occupy residues 1264–1273 (SNSSSSSSKS) and 1300–1310 (ASVSASTPAPS).

As to quaternary structure, interacts with pim and Sse. Cleavage of thr contributes to inactivation of Sse.

The protein resides in the cytoplasm. In terms of biological role, required specifically for chromosome disjunction during all mitoses; maternally provided protein is sufficient until mitosis 14 then zygotic protein is required. Involved in formation and/or maintenance of epithelial structures: bud extension during Malpighian tubule development, and foregut and hindgut morphogenesis. The sequence is that of Protein three rows (thr) from Drosophila pseudoobscura pseudoobscura (Fruit fly).